The following is a 208-amino-acid chain: NAD(P)H dehydrogenase (quinone) (208 aa).

Positions 4 to 192 constitute a Flavodoxin-like domain; the sequence is VLVLYYSSYG…DGARFQGRHV (189 aa). FMN is bound by residues 10–15 and 78–80; these read SSYGHV and TRF. An NAD(+)-binding site is contributed by Y12. W98 lines the substrate pocket. Residues 113–119 and H134 contribute to the FMN site; that span reads STGSQHG. A disordered region spans residues 161 to 183; sequence YGASTLADDGDGGDRQPSANELD.

It belongs to the WrbA family. The cofactor is FMN.

It carries out the reaction a quinone + NADH + H(+) = a quinol + NAD(+). The enzyme catalyses a quinone + NADPH + H(+) = a quinol + NADP(+). In Paracoccus denitrificans (strain Pd 1222), this protein is NAD(P)H dehydrogenase (quinone).